The following is a 90-amino-acid chain: MSFLNVFSSRPTPKQVAKDRLKVILIHDRGELSDEVLDKIRLEILDVLSKYVEIENEDVDITVTKSNAIEGESPSLVANIPIKNIKGKAR.

It belongs to the MinE family.

In terms of biological role, prevents the cell division inhibition by proteins MinC and MinD at internal division sites while permitting inhibition at polar sites. This ensures cell division at the proper site by restricting the formation of a division septum at the midpoint of the long axis of the cell. The chain is Cell division topological specificity factor from Clostridium perfringens (strain SM101 / Type A).